The following is a 474-amino-acid chain: Shufflon protein A (474 aa).

Residues 1–361 (MKKYDRGWAS…TGAILSCQSG (361 aa)) form a constant region region. The tract at residues 362–474 (TWKTSGSLNG…GVFSVFGYQT (113 aa)) is variable region.

This Escherichia coli protein is Shufflon protein A.